Here is a 383-residue protein sequence, read N- to C-terminus: Putative F-box protein At3g22650 (383 aa).

The F-box domain occupies 3-50 (SCERSLLPIDIIEEICCRIPVEYLTQFKLTCKQWFALLKDKRFIYKYL).

The sequence is that of Putative F-box protein At3g22650 from Arabidopsis thaliana (Mouse-ear cress).